The chain runs to 204 residues: MVIRHLEYLGPMATIDGWRPEITLPEIAFVGRSNVGKSSLLNKLMRRKSFARVSTTPGRTREIHFFDVNHQFVLADLPGYGYARISKERKAEWRPLIEGYLGTSPRLQGVVQLLDVRHDPTNDDYVMMDFLADVGVPTIVAITKIDKLKPAQARARVEELSKRLGLDADQVVPFSAHTGAGRDELASALMQLLAMPDWRTTEEE.

Residues 23-195 (TLPEIAFVGR…ASALMQLLAM (173 aa)) form the EngB-type G domain. GTP is bound by residues 31–38 (GRSNVGKS), 58–62 (GRTRE), 76–79 (DLPG), 143–146 (TKID), and 174–176 (FSA). The Mg(2+) site is built by Ser38 and Thr60.

Belongs to the TRAFAC class TrmE-Era-EngA-EngB-Septin-like GTPase superfamily. EngB GTPase family. It depends on Mg(2+) as a cofactor.

Its function is as follows. Necessary for normal cell division and for the maintenance of normal septation. In Gemmatimonas aurantiaca (strain DSM 14586 / JCM 11422 / NBRC 100505 / T-27), this protein is Probable GTP-binding protein EngB.